We begin with the raw amino-acid sequence, 963 residues long: Adhesion G protein-coupled receptor D2 (963 aa).

Topologically, residues 1–662 are extracellular; the sequence is MDAPWGAGER…EEESLLRTLS (662 aa). The interval 18 to 38 is disordered; sequence DRSGVSLGPPPTPQVNQGTLG. The region spanning 116-325 is the Pentraxin (PTX) domain; sequence TTAVLVFDER…LPTVWVRLLC (210 aa). A disulfide bridge links Cys-146 with Cys-212. Asn-271 carries N-linked (GlcNAc...) asparagine glycosylation. Residues 489 to 649 form the GAIN-B domain; that stretch reads MALVASVQRL…AILLQIYEVQ (161 aa). Residues 599–649 form a GPS region; the sequence is PLFPPHPPSPYTGGAWATTGCSVAALYLDSTACFCNHSTSFAILLQIYEVQ. A disulfide bridge connects residues Cys-619 and Cys-633. A glycan (N-linked (GlcNAc...) asparagine) is linked at Asn-634. The helical transmembrane segment at 663-683 threads the bilayer; the sequence is FVGCGVSFCALTTTFLLFLVA. At 684–691 the chain is on the cytoplasmic side; that stretch reads GVPKSERT. Residues 692 to 712 form a helical membrane-spanning segment; it reads TVHKNLTFSLASAEGFLMTSE. At 713–720 the chain is on the extracellular side; it reads WAKANEVA. Residues 721 to 741 traverse the membrane as a helical segment; it reads CVAVTVAMHFLFLVAFSWMLV. Residues 742–762 are Cytoplasmic-facing; it reads EGLLLWRKVVAVSMHPGPGMR. Residues 763-783 form a helical membrane-spanning segment; it reads LYHATGWGVPVGIVAVTLAML. Residues 784-800 are Extracellular-facing; it reads PHDYVAPGHCWLNVHTN. A helical transmembrane segment spans residues 801-821; that stretch reads AIWAFVGPVLFVLTANTCILA. Topologically, residues 822 to 857 are cytoplasmic; it reads RVVMITVSSARRRARMLSPQPCLQQQIWTQIWATVK. A helical transmembrane segment spans residues 858-878; that stretch reads PVLVLLPVLGLTWLAGILVHL. Residues 879–880 lie on the Extracellular side of the membrane; that stretch reads SP. The helical transmembrane segment at 881 to 901 threads the bilayer; it reads AWAYAAVGLNSIQGLYIFLVY. Topologically, residues 902-963 are cytoplasmic; sequence AACNEEVRSA…TPRHPLKAPA (62 aa).

The protein belongs to the G-protein coupled receptor 2 family. Adhesion G-protein coupled receptor (ADGR) subfamily.

The protein localises to the membrane. Its function is as follows. Orphan receptor. This is Adhesion G protein-coupled receptor D2 (ADGRD2) from Homo sapiens (Human).